Here is a 374-residue protein sequence, read N- to C-terminus: MIFQTTSEDTLTKARTGILNLNGIELKTPVFMPVGTRGVVKTLSADDLEELEYSLILGNTYHLYLRPGTSVLDRFGGLKKFSTWKKALLTDSGGYQVFSLNSLFKYEQDGVRFQSHIDGSRHYFTPNSVIDIQRSIGSDIMMVLDDCAPFDSGPERLKQSLDRTHRWAEMSVQYWEKNKNSQHLFGIFQGGIDLDFRLESLNTITSLPFDGIAIGGLSVGEPRKDFIRILDGISAHTDRNRPLYLMGVGTVPDILDGVKNGVDMFDCVLPTRNARNGQVFTTLGKINLRNEKWKSSDTPMDPNCTCKVCKRYSIGYIRHLHHVGEITAFSLSTYHNLHFMKNFLTEIQNSIQKGEFLEIYAKWKNLYEKPEFSG.

Aspartate 91 serves as the catalytic Proton acceptor. Residues aspartate 91–tyrosine 95, aspartate 145, glutamine 189, and glycine 216 contribute to the substrate site. Residues glycine 247–aspartate 253 form an RNA binding region. Aspartate 266 (nucleophile) is an active-site residue. The tract at residues threonine 271–arginine 275 is RNA binding; important for wobble base 34 recognition. The Zn(2+) site is built by cysteine 304, cysteine 306, cysteine 309, and histidine 335.

This sequence belongs to the queuine tRNA-ribosyltransferase family. In terms of assembly, homodimer. Within each dimer, one monomer is responsible for RNA recognition and catalysis, while the other monomer binds to the replacement base PreQ1. Zn(2+) is required as a cofactor.

The catalysed reaction is 7-aminomethyl-7-carbaguanine + guanosine(34) in tRNA = 7-aminomethyl-7-carbaguanosine(34) in tRNA + guanine. The protein operates within tRNA modification; tRNA-queuosine biosynthesis. In terms of biological role, catalyzes the base-exchange of a guanine (G) residue with the queuine precursor 7-aminomethyl-7-deazaguanine (PreQ1) at position 34 (anticodon wobble position) in tRNAs with GU(N) anticodons (tRNA-Asp, -Asn, -His and -Tyr). Catalysis occurs through a double-displacement mechanism. The nucleophile active site attacks the C1' of nucleotide 34 to detach the guanine base from the RNA, forming a covalent enzyme-RNA intermediate. The proton acceptor active site deprotonates the incoming PreQ1, allowing a nucleophilic attack on the C1' of the ribose to form the product. After dissociation, two additional enzymatic reactions on the tRNA convert PreQ1 to queuine (Q), resulting in the hypermodified nucleoside queuosine (7-(((4,5-cis-dihydroxy-2-cyclopenten-1-yl)amino)methyl)-7-deazaguanosine). This chain is Queuine tRNA-ribosyltransferase, found in Leptospira interrogans serogroup Icterohaemorrhagiae serovar Lai (strain 56601).